The following is an 89-amino-acid chain: Large ribosomal subunit protein bL27 (89 aa).

Belongs to the bacterial ribosomal protein bL27 family.

This is Large ribosomal subunit protein bL27 from Bacteroides fragilis (strain ATCC 25285 / DSM 2151 / CCUG 4856 / JCM 11019 / LMG 10263 / NCTC 9343 / Onslow / VPI 2553 / EN-2).